The primary structure comprises 109 residues: Iron-sulfur assembly protein IscA-like 3, mitochondrial (109 aa).

Residues 1 to 18 constitute a mitochondrion transit peptide; that stretch reads MRKQVLALSDTAAARIRQ. Residues Cys37, Cys100, and Cys102 each coordinate Fe cation.

It belongs to the HesB/IscA family. Homodimer; may form tetramers and higher multimers. Requires Fe cation as cofactor.

It localises to the mitochondrion. In terms of biological role, involved in the assembly of mitochondrial iron-sulfur proteins. Probably involved in the binding of an intermediate of Fe/S cluster assembly. The polypeptide is Iron-sulfur assembly protein IscA-like 3, mitochondrial (Arabidopsis thaliana (Mouse-ear cress)).